The chain runs to 163 residues: NADH-quinone oxidoreductase subunit I (163 aa).

2 consecutive 4Fe-4S ferredoxin-type domains span residues 53 to 83 and 94 to 123; these read LRRY…IEAG and VRYD…EGPN. Residues C63, C66, C69, C73, C103, C106, C109, and C113 each coordinate [4Fe-4S] cluster.

It belongs to the complex I 23 kDa subunit family. In terms of assembly, NDH-1 is composed of 14 different subunits. Subunits NuoA, H, J, K, L, M, N constitute the membrane sector of the complex. Requires [4Fe-4S] cluster as cofactor.

It is found in the cell inner membrane. The enzyme catalyses a quinone + NADH + 5 H(+)(in) = a quinol + NAD(+) + 4 H(+)(out). In terms of biological role, NDH-1 shuttles electrons from NADH, via FMN and iron-sulfur (Fe-S) centers, to quinones in the respiratory chain. The immediate electron acceptor for the enzyme in this species is believed to be ubiquinone. Couples the redox reaction to proton translocation (for every two electrons transferred, four hydrogen ions are translocated across the cytoplasmic membrane), and thus conserves the redox energy in a proton gradient. The chain is NADH-quinone oxidoreductase subunit I from Brucella canis (strain ATCC 23365 / NCTC 10854 / RM-666).